A 334-amino-acid polypeptide reads, in one-letter code: MKIVFWGTPSFAVPSLERLLREPDCEVLGVVTQPDKRRGRGNQLQPEAVKKVALAHNLPLWQPQRVKKDAATLADLRSLAADFFVVVAYGQILSPEILAMPRLGCINNHASLLPRYRGAAPIQWSLYNGETETGITTMLMDAGMDTGAMLLQRTLVVGLLENAEQVSQRLAELGADLVVETLRQQVVGQLQPIPQDNSQATYAPLIKKEDYGLDWHKSAIALQNQIRGFYPDCQTSLRGQPLKVSATLPLGSAYWSALPPEFQALAPQWTDERFAENHPPGSVIGLAKNLGPIIQTGAGGLLLLQVQPAGKRIQSGWDFVNGARLQIGEQLGLT.

111–114 contacts (6S)-5,6,7,8-tetrahydrofolate; it reads SLLP.

This sequence belongs to the Fmt family.

It carries out the reaction L-methionyl-tRNA(fMet) + (6R)-10-formyltetrahydrofolate = N-formyl-L-methionyl-tRNA(fMet) + (6S)-5,6,7,8-tetrahydrofolate + H(+). Functionally, attaches a formyl group to the free amino group of methionyl-tRNA(fMet). The formyl group appears to play a dual role in the initiator identity of N-formylmethionyl-tRNA by promoting its recognition by IF2 and preventing the misappropriation of this tRNA by the elongation apparatus. This is Methionyl-tRNA formyltransferase from Cyanothece sp. (strain PCC 7425 / ATCC 29141).